Here is a 557-residue protein sequence, read N- to C-terminus: Formate--tetrahydrofolate ligase (557 aa).

65–72 contacts ATP; the sequence is TPAGEGKT.

It belongs to the formate--tetrahydrofolate ligase family.

The catalysed reaction is (6S)-5,6,7,8-tetrahydrofolate + formate + ATP = (6R)-10-formyltetrahydrofolate + ADP + phosphate. The protein operates within one-carbon metabolism; tetrahydrofolate interconversion. The chain is Formate--tetrahydrofolate ligase from Methylococcus capsulatus (strain ATCC 33009 / NCIMB 11132 / Bath).